The sequence spans 201 residues: Protein GrpE (201 aa).

Residues 1–32 are disordered; sequence MTDRDRQPEDTTAPTGEPVVSKPYIMPDDPEP.

The protein belongs to the GrpE family. As to quaternary structure, homodimer.

It is found in the cytoplasm. Functionally, participates actively in the response to hyperosmotic and heat shock by preventing the aggregation of stress-denatured proteins, in association with DnaK and GrpE. It is the nucleotide exchange factor for DnaK and may function as a thermosensor. Unfolded proteins bind initially to DnaJ; upon interaction with the DnaJ-bound protein, DnaK hydrolyzes its bound ATP, resulting in the formation of a stable complex. GrpE releases ADP from DnaK; ATP binding to DnaK triggers the release of the substrate protein, thus completing the reaction cycle. Several rounds of ATP-dependent interactions between DnaJ, DnaK and GrpE are required for fully efficient folding. In Bradyrhizobium diazoefficiens (strain JCM 10833 / BCRC 13528 / IAM 13628 / NBRC 14792 / USDA 110), this protein is Protein GrpE.